The following is a 419-amino-acid chain: Tubby-like protein 4 (419 aa).

The segment at 1–96 is disordered; sequence MAATKREPLR…EREEEEEGSS (96 aa). Positions 33 to 57 are enriched in basic and acidic residues; that stretch reads AKEKEKENEVPTEIGRGKDGGEKKP.

The protein belongs to the TUB family.

The sequence is that of Tubby-like protein 4 (TULP4) from Oryza sativa subsp. japonica (Rice).